A 278-amino-acid chain; its full sequence is Putative transposase for insertion sequence element IS986/IS6110 (278 aa).

Positions 101 to 268 (GPPAPNRLWV…VPPVELEAAY (168 aa)) constitute an Integrase catalytic domain.

Involved in the transposition of the insertion sequence. This Mycobacterium tuberculosis (strain CDC 1551 / Oshkosh) protein is Putative transposase for insertion sequence element IS986/IS6110.